Consider the following 1067-residue polypeptide: Probable isoleucine--tRNA ligase, cytoplasmic (1067 aa).

A 'HIGH' region motif is present at residues 47–57 (PFATGLPHYGH). Positions 604-608 (KMSKR) match the 'KMSKS' region motif. Lysine 607 is an ATP binding site.

The protein belongs to the class-I aminoacyl-tRNA synthetase family.

It is found in the cytoplasm. The catalysed reaction is tRNA(Ile) + L-isoleucine + ATP = L-isoleucyl-tRNA(Ile) + AMP + diphosphate. This is Probable isoleucine--tRNA ligase, cytoplasmic (ileS) from Dictyostelium discoideum (Social amoeba).